We begin with the raw amino-acid sequence, 536 residues long: Quinate permease (536 aa).

At 1–26 (MTLLALKEDRPTPKAVYNWRVYTCAA) the chain is on the cytoplasmic side. A helical membrane pass occupies residues 27 to 47 (IASFASCMIGYDSAFIGTTLA). The Extracellular segment spans residues 48 to 74 (LPSFKKEFDFASYTPGALALLQSNIVS). Residues 75–95 (VYQAGAFFGSLFAFATSYFLG) form a helical membrane-spanning segment. Residues 96–98 (RRK) are Cytoplasmic-facing. A helical transmembrane segment spans residues 99 to 119 (SLIAFSVVFIIGAAIMLAADG). Topologically, residues 120–131 (QGRGIAPIIAGR) are extracellular. Residues 132 to 152 (VLAGIGVGGASNMVPIYISEL) form a helical membrane-spanning segment. Residues 153-160 (APPAVRGR) lie on the Cytoplasmic side of the membrane. A helical membrane pass occupies residues 161-181 (LVGIYELGWQIGGLVGFWINY). Residues 182–195 (GVNTTMAPTRSQWL) lie on the Extracellular side of the membrane. Asparagine 184 is a glycosylation site (N-linked (GlcNAc...) asparagine). A helical membrane pass occupies residues 196-216 (IPFAVQLIPAGLLFLGSFWIP). The Cytoplasmic segment spans residues 217–285 (ESPRWLFANG…SLKQRKVQWR (69 aa)). Residues 286 to 306 (FFLGGMLFLWQNGSGINAINY) form a helical membrane-spanning segment. The Extracellular segment spans residues 307–327 (YSPTVFRSIGITGTNTGFLTT). Residues 328–349 (GIFGVVKMVLTIVWLLWLVDLV) traverse the membrane as a helical segment. Topologically, residues 350–352 (GRR) are cytoplasmic. Residues 353 to 373 (RMLFIGATGGSLCMWFIGAYI) traverse the membrane as a helical segment. Over 374–389 (KIAGPGSTKAEDAKLT) the chain is Extracellular. The chain crosses the membrane as a helical span at residues 390 to 410 (SGGIAAIFFFYLWTAFYTPSW). Topologically, residues 411-435 (NGTPWVINSEMFDQNTRSLGQASAA) are cytoplasmic. Residues 436 to 456 (ANNWFWNFIISRFTPQMFIKM) form a helical membrane-spanning segment. Over 457 to 458 (EY) the chain is Extracellular. A helical membrane pass occupies residues 459–479 (GVYFFFASLMLLSIVFIYFFI). Residues 480–536 (PETKSIPLEAMDRLFEIKPVHNANKILMAELNFDRNPEREESSLDEKDRVTQTENAV) are Cytoplasmic-facing. Basic and acidic residues predominate over residues 516–530 (PEREESSLDEKDRVT). Residues 516-536 (PEREESSLDEKDRVTQTENAV) are disordered.

This sequence belongs to the major facilitator superfamily. Sugar transporter (TC 2.A.1.1) family.

It localises to the membrane. The chain is Quinate permease (qa-y) from Neurospora terricola.